The following is a 148-amino-acid chain: Lysozyme-like protein 6 (148 aa).

An N-terminal signal peptide occupies residues 1–19 (MTKALLIYLVSSFLALNQA). The 129-residue stretch at 20-148 (SLISRCDLAQ…FYWLTGCRLR (129 aa)) folds into the C-type lysozyme domain. Cystine bridges form between Cys25–Cys145, Cys49–Cys133, Cys83–Cys98, and Cys94–Cys112. Residues Glu54 and Asp71 contribute to the active site.

Belongs to the glycosyl hydrolase 22 family. In terms of assembly, monomer. Expressed in testis, epididymis and spermatozoa (at protein level). Expressed in late-stage spermatocytes and round spermatids.

It is found in the secreted. The protein resides in the cell surface. It localises to the cell projection. The protein localises to the cilium. Its subcellular location is the flagellum. The catalysed reaction is Hydrolysis of (1-&gt;4)-beta-linkages between N-acetylmuramic acid and N-acetyl-D-glucosamine residues in a peptidoglycan and between N-acetyl-D-glucosamine residues in chitodextrins.. Its function is as follows. May be involved sperm-egg plasma membrane adhesion and fusion during fertilization. Exhibits bacteriolytic activity in vitro against Micrococcus luteus and Staphylococcus aureus. Shows weak bacteriolytic activity against Gram-positive bacteria at physiological pH. Bacteriolytic activity is pH-dependent, with a maximum at around pH 5.6. In Homo sapiens (Human), this protein is Lysozyme-like protein 6 (LYZL6).